We begin with the raw amino-acid sequence, 205 residues long: Golgi to ER traffic protein 1 (205 aa).

The Lumenal segment spans residues 1–9; the sequence is MFELQPSSI. Residues 10–29 traverse the membrane as a helical segment; that stretch reads VVLVFCVLAIKVCISLIGKT. The Cytoplasmic portion of the chain corresponds to 30 to 116; that stretch reads TIQDRIWYLY…QISKLVNLAI (87 aa). A coiled-coil region spans residues 53–103; it reads ALAQKREELVRVNKERRAISAQDEYAKWTKLNRQFDKLNSEVNDLAEATSS. A helical membrane pass occupies residues 117 to 137; it reads AATTTAPIWFSRIWYRKVVLF. The Lumenal portion of the chain corresponds to 138 to 161; sequence YLPPKVFPYYIEWVLALPFIVTGG. Residues 162 to 178 form a helical membrane-spanning segment; it reads VGLTVWMFALNSVLSSL. The Cytoplasmic segment spans residues 179–205; the sequence is EFLIKFYLEEPVKKPEAPAASEAQTKQ.

It belongs to the WRB/GET1 family. As to quaternary structure, component of the Golgi to ER traffic (GET) complex, which is composed of GET1, GET2 and GET3. Within the complex, GET1 and GET2 form a heterotetramer which is stabilized by phosphatidylinositol binding and which binds to the GET3 homodimer.

It is found in the endoplasmic reticulum membrane. It localises to the golgi apparatus membrane. In terms of biological role, required for the post-translational delivery of tail-anchored (TA) proteins to the endoplasmic reticulum. Together with GET2, acts as a membrane receptor for soluble GET3, which recognizes and selectively binds the transmembrane domain of TA proteins in the cytosol. The GET complex cooperates with the HDEL receptor ERD2 to mediate the ATP-dependent retrieval of resident ER proteins that contain a C-terminal H-D-E-L retention signal from the Golgi to the ER. This Clavispora lusitaniae (strain ATCC 42720) (Yeast) protein is Golgi to ER traffic protein 1.